Consider the following 159-residue polypeptide: Urease accessory protein UreE (159 aa).

It belongs to the UreE family.

It localises to the cytoplasm. Involved in urease metallocenter assembly. Binds nickel. Probably functions as a nickel donor during metallocenter assembly. This Acinetobacter baylyi (strain ATCC 33305 / BD413 / ADP1) protein is Urease accessory protein UreE.